A 409-amino-acid polypeptide reads, in one-letter code: Putative lipoate-protein ligase A (409 aa).

Positions 146–330 constitute a BPL/LPL catalytic domain; that stretch reads GPDNCRLLFY…RFQKTFKVDG (185 aa). Residues R188, 193-196, and K249 contribute to the ATP site; that span reads GTVL. Residue K249 coordinates (R)-lipoate.

The protein belongs to the LplA family. Monomer.

The catalysed reaction is L-lysyl-[lipoyl-carrier protein] + (R)-lipoate + ATP = N(6)-[(R)-lipoyl]-L-lysyl-[lipoyl-carrier protein] + AMP + diphosphate + H(+). The protein operates within protein modification; protein lipoylation via exogenous pathway; protein N(6)-(lipoyl)lysine from lipoate: step 1/2. It functions in the pathway protein modification; protein lipoylation via exogenous pathway; protein N(6)-(lipoyl)lysine from lipoate: step 2/2. Its function is as follows. Catalyzes both the ATP-dependent activation of exogenously supplied lipoate to lipoyl-AMP and the transfer of the activated lipoyl onto the lipoyl domains of lipoate-dependent enzymes. This is Putative lipoate-protein ligase A (AIM22) from Saccharomyces cerevisiae (strain RM11-1a) (Baker's yeast).